The chain runs to 113 residues: Iron-sulfur cluster insertion protein ErpA (113 aa).

Cys-41, Cys-105, and Cys-107 together coordinate iron-sulfur cluster.

The protein belongs to the HesB/IscA family. In terms of assembly, homodimer. It depends on iron-sulfur cluster as a cofactor.

Required for insertion of 4Fe-4S clusters for at least IspG. This is Iron-sulfur cluster insertion protein ErpA from Aliivibrio salmonicida (strain LFI1238) (Vibrio salmonicida (strain LFI1238)).